A 681-amino-acid polypeptide reads, in one-letter code: Sodium/glucose cotransporter 4 (681 aa).

Over 1–36 (MSKELAAMGPGASGDGVRTETAPHIALDSRVGLHAY) the chain is Extracellular. A helical membrane pass occupies residues 37–57 (DISVVVIYFVFVIAVGIWSSI). Residues 58–75 (RASRGTIGGYFLAGRSMS) lie on the Cytoplasmic side of the membrane. The chain crosses the membrane as a helical span at residues 76–98 (WWPIGASLMSSNVGSGLFIGLAG). Residues 99-114 (TGAAGGLAVGGFEWNA) are Extracellular-facing. The chain crosses the membrane as a helical span at residues 115-135 (TWLLLALGWVFVPVYIAAGVV). Residues 136–157 (TMPQYLKKRFGGQRIQVYMSVL) are Cytoplasmic-facing. Residues 158 to 178 (SLILYIFTKISTDIFSGALFI) traverse the membrane as a helical segment. The Extracellular segment spans residues 179-190 (QMALGWNLYLST). The helical transmembrane segment at 191-211 (GILLVVTAVYTIAGGLMAVIY) threads the bilayer. Over 212–217 (TDALQT) the chain is Cytoplasmic. Residues 218–238 (VIMVGGALVLMFLGFQDVGWY) form a helical membrane-spanning segment. Topologically, residues 239-275 (PGLEQRYRQAIPNVTVPNTTCHLPRPDAFHILRDPVS) are extracellular. Residue Asn-251 is glycosylated (N-linked (GlcNAc...) asparagine). A helical membrane pass occupies residues 276 to 296 (GDIPWPGLIFGLTVLATWCWC). Over 297–317 (TDQVIVQRSLSAKSLSHAKGG) the chain is Cytoplasmic. Residues 318 to 338 (SVLGGYLKILPMFFIVMPGMI) traverse the membrane as a helical segment. Topologically, residues 339–383 (SRALFPDEVGCVDPDVCQRICGARVGCSNIAYPKLVMALMPVGLR) are extracellular. A helical membrane pass occupies residues 384–406 (GLMIAVIMAALMSSLTSIFNSSS). Residues 407–427 (TLFTIDVWQRFRRKSTEQELM) are Cytoplasmic-facing. Residues 428-448 (VVGRVFVVFLVVISILWIPII) traverse the membrane as a helical segment. Residues 449–459 (QSSNSGQLFDY) lie on the Extracellular side of the membrane. A helical transmembrane segment spans residues 460–480 (IQAVTSYLAPPITALFLLAIF). Topologically, residues 481 to 487 (CKRVTEP) are cytoplasmic. Residues 488 to 508 (GAFWGLVFGLGVGLLRMILEF) form a helical membrane-spanning segment. The Extracellular segment spans residues 509–530 (SYPAPACGEVDRRPAVLKDFHY). Residues 531–551 (LYFAILLCGLTAIVIVIVSLC) form a helical membrane-spanning segment. Residues 552–660 (TTPIPEEQLT…SIEEEPLWRH (109 aa)) are Cytoplasmic-facing. The span at 579-591 (AHESTPEISERPA) shows a compositional bias: basic and acidic residues. The tract at residues 579-614 (AHESTPEISERPAGECPAGGGAAENSSLGQEQPEAP) is disordered. 2 positions are modified to phosphoserine: Ser-604 and Ser-605. Residues 661–681 (VCNINAVLLLAINIFLWGYFA) form a helical membrane-spanning segment.

This sequence belongs to the sodium:solute symporter (SSF) (TC 2.A.21) family. Expressed in the small intestine, kidney and liver.

The protein localises to the cell membrane. It catalyses the reaction D-mannose(out) + n Na(+)(out) = D-mannose(in) + n Na(+)(in). Its function is as follows. Electrogenic Na(+)-coupled sugar symporter that may play a primary role in D-mannose and possibly D-fructose and D-glucose transport at the plasma membrane. Transporter activity is driven by a transmembrane Na(+) electrochemical gradient set by the Na(+)/K(+) pump. Exclusively recognizes sugar substrates having a pyranose ring with an axial hydroxyl group on carbon 2. In Homo sapiens (Human), this protein is Sodium/glucose cotransporter 4.